The following is a 245-amino-acid chain: Complement C1q subcomponent subunit C (245 aa).

Residues 1–28 (MDVGPSSLPHLGLKLLLLLLLLPLRGQA) form the signal peptide. The region spanning 31-112 (GCYGIPGMPG…GIPGEPGEEG (82 aa)) is the Collagen-like domain. P36, P39, P42, P45, P54, and P63 each carry 4-hydroxyproline. A disordered region spans residues 45 to 113 (PGKDGYDGLP…IPGEPGEEGR (69 aa)). Positions 54 to 71 (PGPKGEPGIPAIPGIRGP) are enriched in low complexity. K75 bears the 5-hydroxylysine mark. The O-linked (Gal...) hydroxylysine glycan is linked to K75. A 4-hydroxyproline mark is found at P81, P93, P96, P99, and P105. Residues 90–99 (MGPPGMPGVP) show a composition bias toward pro residues. The C1q domain maps to 115–245 (KQKFQSVFTV…VFSGFLLFPD (131 aa)). C179 and C193 are oxidised to a cystine.

As to quaternary structure, core component of the complement C1 complex, a calcium-dependent complex composed of 1 molecule of the C1Q subcomplex, 2 molecules of C1R and 2 molecules of C1S. The C1Q subcomplex is composed 18 subunits: 3 chains of C1QA, C1QB, and C1QC trimerize to form 6 collagen-like triple helices connected to six globular ligand-recognition modules (C1q domain). In terms of processing, O-linked glycans consist of Glc-Gal disaccharides bound to the oxygen atom of post-translationally added hydroxyl groups.

The protein resides in the secreted. Its subcellular location is the cell surface. With respect to regulation, the C1Q subcomplex is inhibited by sulfated molecules, such as triterpenoid sulfates, heparan sulfate, or chondroitin sulfates. Its function is as follows. Core component of the complement C1 complex, a multiprotein complex that initiates the classical pathway of the complement system, a cascade of proteins that leads to phagocytosis and breakdown of pathogens and signaling that strengthens the adaptive immune system. The classical complement pathway is initiated by the C1Q subcomplex of the C1 complex, which specifically binds IgG or IgM immunoglobulins complexed with antigens, forming antigen-antibody complexes on the surface of pathogens: C1QA, together with C1QB and C1QC, specifically recognizes and binds the Fc regions of IgG or IgM via its C1q domain. Immunoglobulin-binding activates the proenzyme C1R, which cleaves C1S, initiating the proteolytic cascade of the complement system. The C1Q subcomplex is activated by a hexamer of IgG complexed with antigens, while it is activated by a pentameric IgM. The C1Q subcomplex also recognizes and binds phosphatidylserine exposed on the surface of cells undergoing programmed cell death, possibly promoting activation of the complement system. The sequence is that of Complement C1q subcomponent subunit C from Homo sapiens (Human).